We begin with the raw amino-acid sequence, 307 residues long: N-acetylmuramic acid 6-phosphate etherase 2 (307 aa).

The SIS domain occupies Ile62 to Lys225. Residue Glu90 is the Proton donor of the active site. Glu121 is an active-site residue.

It belongs to the GCKR-like family. MurNAc-6-P etherase subfamily. In terms of assembly, homodimer.

It carries out the reaction N-acetyl-D-muramate 6-phosphate + H2O = N-acetyl-D-glucosamine 6-phosphate + (R)-lactate. Its pathway is amino-sugar metabolism; 1,6-anhydro-N-acetylmuramate degradation. It functions in the pathway amino-sugar metabolism; N-acetylmuramate degradation. It participates in cell wall biogenesis; peptidoglycan recycling. Specifically catalyzes the cleavage of the D-lactyl ether substituent of MurNAc 6-phosphate, producing GlcNAc 6-phosphate and D-lactate. Together with AnmK, is also required for the utilization of anhydro-N-acetylmuramic acid (anhMurNAc) either imported from the medium or derived from its own cell wall murein, and thus plays a role in cell wall recycling. This is N-acetylmuramic acid 6-phosphate etherase 2 from Vibrio cholerae serotype O1 (strain ATCC 39315 / El Tor Inaba N16961).